The primary structure comprises 330 residues: Ferredoxin--NADP reductase (330 aa).

Positions 34, 42, 47, 87, 121, 285, and 325 each coordinate FAD.

The protein belongs to the ferredoxin--NADP reductase type 2 family. As to quaternary structure, homodimer. Requires FAD as cofactor.

It catalyses the reaction 2 reduced [2Fe-2S]-[ferredoxin] + NADP(+) + H(+) = 2 oxidized [2Fe-2S]-[ferredoxin] + NADPH. This chain is Ferredoxin--NADP reductase, found in Limosilactobacillus fermentum (strain NBRC 3956 / LMG 18251) (Lactobacillus fermentum).